We begin with the raw amino-acid sequence, 334 residues long: METTGEVVKTTTGSDGGVTVVRSNAPSDFHMAPRSETSNTPPNSVAPPPPPPPQNSFTPSAAMDGFSSGPIKKRRGRPRKYGHDGAAVTLSPNPISSAAPTTSHVIDFSTTSEKRGKMKPATPTPSSFIRPKYQVENLGEWSPSSAAANFTPHIITVNAGEDVTKRIISFSQQGSLAICVLCANGVVSSVTLRQPDSSGGTLTYEGRFEILSLSGTFMPSDSDGTRSRTGGMSVSLASPDGRVVGGGVAGLLVAATPIQVVVGTFLGGTNQQEQTPKPHNHNFMSSPLMPTSSNVADHRTIRPMTSSLPISTWTPSFPSDSRHKHSHDFNITLT.

Low complexity predominate over residues 1–21 (METTGEVVKTTTGSDGGVTVV). Disordered regions lie at residues 1–103 (METT…PTTS) and 109–128 (STTS…PSSF). A compositionally biased stretch (pro residues) spans 44–54 (SVAPPPPPPPQ). The segment covering 71–80 (IKKRRGRPRK) has biased composition (basic residues). A Bipartite nuclear localization signal motif is present at residues 72–80 (KKRRGRPRK). The a.T hook DNA-binding region spans 72-84 (KKRRGRPRKYGHD). Residues 90 to 103 (LSPNPISSAAPTTS) are compositionally biased toward polar residues. The PPC domain occupies 147–287 (AANFTPHIIT…PHNHNFMSSP (141 aa)). Over residues 306–319 (SSLPISTWTPSFPS) the composition is skewed to polar residues. A disordered region spans residues 306-334 (SSLPISTWTPSFPSDSRHKHSHDFNITLT).

The protein resides in the nucleus. Functionally, transcription factor that specifically binds AT-rich DNA sequences related to the nuclear matrix attachment regions (MARs). The polypeptide is AT-hook motif nuclear-localized protein 2 (Arabidopsis thaliana (Mouse-ear cress)).